The primary structure comprises 780 residues: GATOR2 complex protein WDR24 (780 aa).

WD repeat units lie at residues 67–107 (SLNF…RNKQ), 113–153 (EHKR…SVST), 156–196 (GQSE…RCER), 200–240 (AHNG…AKEI), 244–286 (QTIA…IPFA), and 290–333 (EHKD…IDRA). The C4-type zinc-finger motif lies at 708–730 (NCSNCKRPMSNKGWICDRCRQCA). Zn(2+) contacts are provided by Cys709, Cys712, Cys723, Cys726, Cys733, Cys736, Cys747, Cys750, His752, His755, His758, Cys769, Cys773, His775, and Cys777. The RING-type; atypical zinc finger occupies 731-780 (SMCAVCHHVVKGLFVWCQGCCHGGHLQHIMNWMQNNCYCPAGCGHVCEYS).

This sequence belongs to the WD repeat WDR24 family. As to quaternary structure, component of the GATOR2 subcomplex, composed of MIOS, SEC13, SEH1L, WDR24 and WDR59. The GATOR2 complex interacts with CASTOR1 and CASTOR2; the interaction is negatively regulated by arginine. The GATOR2 complex interacts with SESN1, SESN2 and SESN3; the interaction is negatively regulated by amino acids.

The protein resides in the lysosome membrane. It catalyses the reaction S-ubiquitinyl-[E2 ubiquitin-conjugating enzyme]-L-cysteine + [acceptor protein]-L-lysine = [E2 ubiquitin-conjugating enzyme]-L-cysteine + N(6)-ubiquitinyl-[acceptor protein]-L-lysine.. Its pathway is protein modification; protein ubiquitination. Its activity is regulated as follows. The GATOR2 complex is negatively regulated by the upstream amino acid sensors CASTOR1 and SESN2, which sequester the GATOR2 complex in absence of amino acids. In the presence of abundant amino acids, GATOR2 is released from CASTOR1 and SESN2 and activated. Its function is as follows. Catalytic component of the GATOR2 complex, a multiprotein complex that acts as an activator of the amino acid-sensing branch of the mTORC1 signaling pathway. The GATOR2 complex indirectly activates mTORC1 through the inhibition of the GATOR1 subcomplex. GATOR2 probably acts as an E3 ubiquitin-protein ligase toward GATOR1. In the presence of abundant amino acids, the GATOR2 complex mediates ubiquitination of the NPRL2 core component of the GATOR1 complex, leading to GATOR1 inactivation. In the absence of amino acids, GATOR2 is inhibited, activating the GATOR1 complex. In addition to its role in regulation of the mTORC1 complex, promotes the acidification of lysosomes and facilitates autophagic flux. Within the GATOR2 complex, WDR24 constitutes the catalytic subunit that mediates 'Lys-6'-linked ubiquitination of NPRL2. The chain is GATOR2 complex protein WDR24 from Xenopus laevis (African clawed frog).